The primary structure comprises 335 residues: 3-hydroxyisobutyrate dehydrogenase, mitochondrial (335 aa).

Residues 1 to 35 (MAASLGFRGAASGLWYWSGRRRPVGSLAAVCSRSM) constitute a mitochondrion transit peptide. Position 39-68 (39-68 (TPVGFIGLGNMGNPMAKNLMKHGYPLILYD)) interacts with NAD(+). Lys59, Lys75, and Lys78 each carry N6-acetyllysine; alternate. Lys59, Lys75, and Lys78 each carry N6-succinyllysine; alternate. N6-succinyllysine is present on Lys94. Residues 102 to 103 (LP) and Asn107 each bind NAD(+). Lys120 carries the N6-acetyllysine modification. Thr133 lines the NAD(+) pocket. Lys140 is subject to N6-succinyllysine. Position 144 is an N6-acetyllysine (Lys144). Lys148 is modified (N6-acetyllysine; alternate). N6-succinyllysine; alternate is present on Lys148. Lys208 is a catalytic residue. Lys237 and Lys241 each carry N6-acetyllysine; alternate. N6-succinyllysine; alternate is present on residues Lys237 and Lys241. Position 283 (Lys283) interacts with NAD(+). Lys296 bears the N6-succinyllysine mark. Lys320 carries the N6-acetyllysine; alternate modification. An N6-succinyllysine; alternate modification is found at Lys320.

The protein belongs to the HIBADH-related family. 3-hydroxyisobutyrate dehydrogenase subfamily. In terms of assembly, homodimer.

It localises to the mitochondrion. It carries out the reaction 3-hydroxy-2-methylpropanoate + NAD(+) = 2-methyl-3-oxopropanoate + NADH + H(+). It functions in the pathway amino-acid degradation; L-valine degradation. In Mus musculus (Mouse), this protein is 3-hydroxyisobutyrate dehydrogenase, mitochondrial (Hibadh).